The primary structure comprises 427 residues: MDNESILITGPEILDAGGIRRGSVLIEDNRIADVSNTLSPGDADTVIDGTGKLLIPGLVNTHTHLSMTLFRGIADDLPLDRWLNDHIWPAEARLNGDYCYAGALLGCIEMIRSGTTSFNDMYFYMDHVARAVEEAGLRCVISHGMIDLGDTEKMTAELRESRRIIKECHGMADDRIRVALGPHSPYTCSEELLKETAALADKNDLMIHIHVSETENEVSEVSRSHGMTPVEYLDEVGVLGPRTVAAHCVWLKDWEIDVLAERDVKVSHNPSSNMKLASGVSPVARLLQRGVNVSLGTDGAASNNNLDMFQEMKTASLLQKVNLEDPTALPAMDVFSMATLNGARALGIDAGLIAPGKLADIVILNTRRPHLTPWRNPPSHTVYSASGADVDTVICDGRILLRDGELEVLEEKYVMELAEAAAAELTG.

Zn(2+) contacts are provided by histidine 62 and histidine 64. Glutamate 91 and histidine 183 together coordinate substrate. Histidine 210 is a Zn(2+) binding site. Positions 213 and 298 each coordinate substrate. A Zn(2+)-binding site is contributed by aspartate 298.

This sequence belongs to the metallo-dependent hydrolases superfamily. MTA/SAH deaminase family. As to quaternary structure, homotetramer. Zn(2+) is required as a cofactor.

It catalyses the reaction 5'-deoxyadenosine + H2O + H(+) = 5'-deoxyinosine + NH4(+). The catalysed reaction is S-adenosyl-L-homocysteine + H2O + H(+) = S-inosyl-L-homocysteine + NH4(+). It carries out the reaction S-methyl-5'-thioadenosine + H2O + H(+) = S-methyl-5'-thioinosine + NH4(+). The enzyme catalyses adenosine + H2O + H(+) = inosine + NH4(+). The protein operates within amino-acid biosynthesis; S-adenosyl-L-methionine biosynthesis. Catalyzes the deamination of three SAM-derived enzymatic products, namely 5'-deoxyadenosine, S-adenosyl-L-homocysteine, and 5'-methylthioadenosine, to produce the inosine analogs. Can also deaminate adenosine. The preferred substrate for this enzyme is 5'-deoxyadenosine, but all these substrates are efficiently deaminated. Likely functions in a S-adenosyl-L-methionine (SAM) recycling pathway from S-adenosyl-L-homocysteine (SAH) produced from SAM-dependent methylation reactions. May also be involved in the recycling of 5'-deoxyadenosine, whereupon the 5'-deoxyribose moiety of 5'-deoxyinosine is further metabolized to deoxyhexoses used for the biosynthesis of aromatic amino acids in methanogens. The protein is 5'-deoxyadenosine deaminase of Methanothermobacter thermautotrophicus (strain ATCC 29096 / DSM 1053 / JCM 10044 / NBRC 100330 / Delta H) (Methanobacterium thermoautotrophicum).